Here is a 443-residue protein sequence, read N- to C-terminus: Dihydroorotase (443 aa).

The Zn(2+) site is built by H80 and H82. Substrate contacts are provided by residues 82–84 (HFR) and N114. D170, H197, and H251 together coordinate Zn(2+). A substrate-binding site is contributed by N297. D324 contacts Zn(2+). Residue D324 is part of the active site. Residues H328 and 342–343 (FG) each bind substrate.

It belongs to the metallo-dependent hydrolases superfamily. DHOase family. Class I DHOase subfamily. Zn(2+) serves as cofactor.

It carries out the reaction (S)-dihydroorotate + H2O = N-carbamoyl-L-aspartate + H(+). The protein operates within pyrimidine metabolism; UMP biosynthesis via de novo pathway; (S)-dihydroorotate from bicarbonate: step 3/3. Its function is as follows. Catalyzes the reversible cyclization of carbamoyl aspartate to dihydroorotate. The chain is Dihydroorotase from Wolbachia sp. subsp. Brugia malayi (strain TRS).